Consider the following 416-residue polypeptide: Phosphoglycerate kinase (416 aa).

The (2R)-3-phosphoglycerate site is built by Val-23, Asp-24, Phe-25, Asn-26, Asn-38, Arg-39, Ser-62, His-63, Gly-65, Arg-66, Leu-121, Arg-122, His-169, and Arg-170. Gly-213 is an ADP binding site. CDP is bound at residue Gly-213. Residues Ala-214 and Lys-215 each contribute to the AMP site. 2 residues coordinate ATP: Ala-214 and Lys-215. Ala-214 lines the Mg(2+) pocket. Asp-218 provides a ligand contact to CDP. Asp-218 contacts Mg(2+). AMP is bound at residue Lys-219. Position 219 (Lys-219) interacts with ATP. Residue Gly-237 coordinates ADP. Gly-237 is a binding site for CDP. Residues Gly-238 and Gly-312 each contribute to the AMP site. 2 residues coordinate ATP: Gly-238 and Gly-312. Residues Gly-337 and Phe-342 each coordinate CDP. Phe-342 provides a ligand contact to ADP. Position 343 (Glu-343) interacts with AMP. Asp-374 provides a ligand contact to Mg(2+). Thr-375 is an ATP binding site.

It belongs to the phosphoglycerate kinase family. In terms of assembly, monomer. Mg(2+) serves as cofactor.

The catalysed reaction is (2R)-3-phosphoglycerate + ATP = (2R)-3-phospho-glyceroyl phosphate + ADP. It participates in carbohydrate degradation; glycolysis; pyruvate from D-glyceraldehyde 3-phosphate: step 2/5. The protein is Phosphoglycerate kinase (PGK) of Plasmodium falciparum (isolate 3D7).